The sequence spans 366 residues: Variable large protein 10 (366 aa).

The N-terminal stretch at 1-18 (MRKRISAIIMTLFMVLAS) is a signal peptide. C19 carries the N-palmitoyl cysteine lipid modification. A lipid anchor (S-diacylglycerol cysteine) is attached at C19.

It belongs to the variable large protein (Vlp) family. Beta subfamily.

The protein resides in the cell outer membrane. The Vlp and Vsp proteins are antigenically distinct proteins, only one vlp or vsp gene is transcriptionally active at any one time. Switching between these genes is a mechanism of host immune response evasion. The sequence is that of Variable large protein 10 from Borrelia hermsii.